The chain runs to 200 residues: Kunitz type trypsin inhibitor 111 (200 aa).

The N-terminal stretch at 1–24 is a signal peptide; it reads MSTISFTIFILANVWLLVVTTSIA. 3 disulfide bridges follow: Cys-62/Cys-108, Cys-160/Cys-172, and Cys-165/Cys-168.

This sequence belongs to the protease inhibitor I3 (leguminous Kunitz-type inhibitor) family. In terms of assembly, interacts with SCP1.

It localises to the secreted. It is found in the extracellular space. Its subcellular location is the apoplast. The chain is Kunitz type trypsin inhibitor 111 (KPI111) from Medicago truncatula (Barrel medic).